A 1580-amino-acid chain; its full sequence is Dynamin-binding protein (1580 aa).

At Met1 the chain carries N-acetylmethionine. SH3 domains lie at 2–61, 66–127, and 146–205; these read EPGS…IVTI, EGER…ELCL, and YSLG…LLGP. Disordered regions lie at residues 211–245, 304–446, 500–546, and 589–688; these read ESVNSRSGDDSAVNGEVDVPPEEAESGGDEDDQQS, NRTE…LVPL, YAQK…DSLD, and RGSS…AQTF. Acidic residues predominate over residues 229-243; that stretch reads VPPEEAESGGDEDDQ. Residues 244–303 form the SH3 4 domain; it reads QSGTYGIALYRFQALETNELDFEVGDRIQILGTLEDGWLEGCLKGKTGVFPHRFVKLCPS. Polar residues-rich tracts occupy residues 422–439 and 502–513; these read QKSQHYLTAGGSHQTSDP and QKHQTSTENTAS. Residues 516–527 are compositionally biased toward basic and acidic residues; sequence DPPERPERRPGL. Residues 608-617 are compositionally biased toward pro residues; that stretch reads RPPPPRPRTP. Basic and acidic residues predominate over residues 671 to 682; that stretch reads APEKEDSEHMEK. Ser683 bears the Phosphoserine mark. Residues 694-755 are a coiled coil; the sequence is LARIRDVEQD…LELQQLRDMT (62 aa). Residues 783–970 enclose the DH domain; that stretch reads KRAKVVAELL…KEINVNINEY (188 aa). The BAR domain occupies 1011-1220; the sequence is LKHLTGFAPQ…LKATDREGNL (210 aa). Positions 1288 to 1351 constitute an SH3 5 domain; the sequence is PPEKLFHVQR…YSSFLKPYNP (64 aa). Over residues 1356–1365 the composition is skewed to low complexity; that stretch reads SDASVASHSS. 2 disordered regions span residues 1356 to 1384 and 1426 to 1514; these read SDASVASHSSTESEHSGSSPGCHRQNSHS and TGHP…GSSE. Positions 1426–1440 are enriched in polar residues; it reads TGHPETGPSTCSSDP. Residues 1516 to 1579 form the SH3 6 domain; the sequence is EGNQVYFAIY…PSNYIRKTEY (64 aa).

Binds DNM1 via its N-terminal SH3 domains. The C-terminal SH3 domain binds a complex containing actin, tubulin, Hsp70 and actin-regulatory proteins, such as ENAH, EVL, WIRE, CR16, WAVE1 and NAP1L1. Interacts with FASLG. Interacts (via SH3 domain 6) with WASL. Interacts (via SH3 domain 6) interacts with ENAH. Interacts (via C-terminal domain) with TJP1; required for the apical cell-cell junction localization of DNMBP.

It localises to the cytoplasm. The protein resides in the golgi apparatus. Its subcellular location is the golgi stack. It is found in the cytoskeleton. The protein localises to the synapse. It localises to the cell junction. Its function is as follows. Plays a critical role as a guanine nucleotide exchange factor (GEF) for CDC42 in several intracellular processes associated with the actin and microtubule cytoskeleton. Regulates the structure of apical junctions in epithelial cells. Participates in the normal lumenogenesis of epithelial cell cysts by regulating spindle orientation. Plays a role in ciliogenesis. May play a role in membrane trafficking between the cell surface and the Golgi. The sequence is that of Dynamin-binding protein from Mus musculus (Mouse).